We begin with the raw amino-acid sequence, 153 residues long: MTSLLLFGASEGGLFDFDATLPLMAVQVVLLTFILNALFFKPVGRVVEEREDYVTSSLADAKKKLAEVEKLESDLKNQLKEARLAAQSVINEAETDSENLYREALALATAEANASREEARREIDSQRESALNQLRSDAEKLGDLIVERLLASK.

A helical transmembrane segment spans residues 20-40 (TLPLMAVQVVLLTFILNALFF).

The protein belongs to the ATPase B chain family. As to quaternary structure, F-type ATPases have 2 components, F(1) - the catalytic core - and F(0) - the membrane proton channel. F(1) has five subunits: alpha(3), beta(3), gamma(1), delta(1), epsilon(1). F(0) has four main subunits: a(1), b(1), b'(1) and c(10-14). The alpha and beta chains form an alternating ring which encloses part of the gamma chain. F(1) is attached to F(0) by a central stalk formed by the gamma and epsilon chains, while a peripheral stalk is formed by the delta, b and b' chains.

The protein resides in the cellular thylakoid membrane. Functionally, f(1)F(0) ATP synthase produces ATP from ADP in the presence of a proton or sodium gradient. F-type ATPases consist of two structural domains, F(1) containing the extramembraneous catalytic core and F(0) containing the membrane proton channel, linked together by a central stalk and a peripheral stalk. During catalysis, ATP synthesis in the catalytic domain of F(1) is coupled via a rotary mechanism of the central stalk subunits to proton translocation. Component of the F(0) channel, it forms part of the peripheral stalk, linking F(1) to F(0). The b'-subunit is a diverged and duplicated form of b found in plants and photosynthetic bacteria. This is ATP synthase subunit b' from Prochlorococcus marinus (strain MIT 9211).